We begin with the raw amino-acid sequence, 781 residues long: Arf-GAP with coiled-coil, ANK repeat and PH domain-containing protein 2 (781 aa).

The 226-residue stretch at 1–226 folds into the BAR domain; the sequence is MKVTVDFEEC…MKDLGAQLDQ (226 aa). The region spanning 266–361 is the PH domain; sequence GIVMEGYLFK…WIKAVQTSIA (96 aa). Basic and acidic residues predominate over residues 365–378; that stretch reads REKGDESEKQEKKS. Residues 365 to 390 form a disordered region; the sequence is REKGDESEKQEKKSSPSTGSLESGSE. Low complexity predominate over residues 379 to 388; it reads SPSTGSLESG. The Arf-GAP domain occupies 399-521; sequence ESALQRVQCI…KFVEKQPAAA (123 aa). A C4-type zinc finger spans residues 414 to 437; it reads CCDCGLADPRWASINLGITLCIEC. Residues 520-576 are disordered; sequence AAVSPLESRTKVLPQSQEEKRHSAPEKSFLAIEQGAASPRVRSSDSGIQQSVDDSRE. 3 ANK repeats span residues 642–671, 675–704, and 708–737; these read NKAT…NVNI, KGRG…NQHA, and DGKD…NEEM.

Its subcellular location is the endosome membrane. The protein localises to the cell membrane. With respect to regulation, GAP activity stimulated by phosphatidylinositol 4,5-bisphosphate (PIP2) and phosphatidic acid. Functionally, GTPase-activating protein (GAP) for ADP ribosylation factor 6 (ARF6). The polypeptide is Arf-GAP with coiled-coil, ANK repeat and PH domain-containing protein 2 (ACAP2) (Gallus gallus (Chicken)).